The sequence spans 304 residues: GTPase Era (304 aa).

One can recognise an Era-type G domain in the interval 7 to 178 (KCGVVAVLGA…KNALAALMPE (172 aa)). The segment at 15-22 (GAPNAGKS) is G1. 15-22 (GAPNAGKS) serves as a coordination point for GTP. The G2 stretch occupies residues 41-45 (QTTRA). The G3 stretch occupies residues 66 to 69 (DTPG). Residues 66-70 (DTPGI) and 128-131 (NKVD) contribute to the GTP site. The interval 128 to 131 (NKVD) is G4. A G5 region spans residues 157 to 159 (VSA). The KH type-2 domain occupies 209–286 (LHEELPYDSA…HLFLHVKVDE (78 aa)).

It belongs to the TRAFAC class TrmE-Era-EngA-EngB-Septin-like GTPase superfamily. Era GTPase family. In terms of assembly, monomer.

It is found in the cytoplasm. The protein resides in the cell inner membrane. An essential GTPase that binds both GDP and GTP, with rapid nucleotide exchange. Plays a role in 16S rRNA processing and 30S ribosomal subunit biogenesis and possibly also in cell cycle regulation and energy metabolism. This chain is GTPase Era, found in Erythrobacter litoralis (strain HTCC2594).